The primary structure comprises 412 residues: 46 kDa FK506-binding nuclear protein (412 aa).

Composition is skewed to acidic residues over residues 95-113 (EEDL…EEEA), 169-178 (GEDIDTDEND), and 188-216 (EGDD…EEEE). Positions 95 to 304 (EEDLEDEEEA…PVEKKEKKQI (210 aa)) are disordered. The span at 247 to 257 (KSQKRRLKKKL) shows a compositional bias: basic residues. Basic and acidic residues predominate over residues 271–303 (DKPKKEEPQQKAEKKKPEAKKEEAPVEKKEKKQ). Positions 324–412 (GKVVMVYYEG…VFEVDLKNVK (89 aa)) constitute a PPIase FKBP-type domain.

This sequence belongs to the FKBP-type PPIase family. Phosphorylated by a nuclear kinase in the presence of Mg(2+) and ATP.

It is found in the nucleus. The enzyme catalyses [protein]-peptidylproline (omega=180) = [protein]-peptidylproline (omega=0). Inhibited by both FK506 and rapamycin. In terms of biological role, PPIases accelerate the folding of proteins. It catalyzes the cis-trans isomerization of proline imidic peptide bonds in oligopeptides. Binds double-stranded DNA in vitro. This Spodoptera frugiperda (Fall armyworm) protein is 46 kDa FK506-binding nuclear protein (FKBP46).